Consider the following 487-residue polypeptide: Glutamyl-tRNA(Gln) amidotransferase subunit A (487 aa).

Active-site charge relay system residues include Lys-79 and Ser-154. Ser-178 functions as the Acyl-ester intermediate in the catalytic mechanism.

The protein belongs to the amidase family. GatA subfamily. Heterotrimer of A, B and C subunits.

It carries out the reaction L-glutamyl-tRNA(Gln) + L-glutamine + ATP + H2O = L-glutaminyl-tRNA(Gln) + L-glutamate + ADP + phosphate + H(+). Allows the formation of correctly charged Gln-tRNA(Gln) through the transamidation of misacylated Glu-tRNA(Gln) in organisms which lack glutaminyl-tRNA synthetase. The reaction takes place in the presence of glutamine and ATP through an activated gamma-phospho-Glu-tRNA(Gln). The protein is Glutamyl-tRNA(Gln) amidotransferase subunit A of Roseiflexus sp. (strain RS-1).